A 622-amino-acid chain; its full sequence is Pyranose 2-oxidase (622 aa).

An N-terminal signal peptide occupies residues 1-28 (MSTSSSDPFYNFAKTSFKSAAAQKASAT). Residues 29–38 (SLPPLPGPDQ) constitute a propeptide that is removed on maturation. At H167 the chain carries Tele-8alpha-FAD histidine. 2 residues coordinate substrate: Q448 and H450. H548 serves as the catalytic Proton acceptor. N593 is an active-site residue.

This sequence belongs to the GMC oxidoreductase family. Homotetramer. FAD serves as cofactor.

Its subcellular location is the periplasm. It catalyses the reaction D-glucose + O2 = 2-dehydro-D-glucose + H2O2. Catalyzes the oxidation of various aldopyranoses and disaccharides on carbon-2 to the corresponding 2-keto sugars concomitant with the reduction of O(2) to H(2)O(2). Plays an important role in lignin degradation of wood rot fungi by supplying the essential cosubstrate H(2)O(2) for the ligninolytic peroxidases, lignin peroxidase and manganese-dependent peroxidase. The polypeptide is Pyranose 2-oxidase (p2ox) (Trametes pubescens (White-rot fungus)).